Reading from the N-terminus, the 699-residue chain is tRNA(Met) cytidine acetyltransferase TmcA (699 aa).

ATP is bound by residues glutamine 179, glycine 201 to methionine 210, and arginine 323. The region spanning isoleucine 359–leucine 543 is the N-acetyltransferase domain. Acetyl-CoA-binding positions include valine 471 to valine 473, glutamate 511, and arginine 518.

It belongs to the RNA cytidine acetyltransferase family. TmcA subfamily.

The protein localises to the cytoplasm. It catalyses the reaction cytidine(34) in elongator tRNA(Met) + acetyl-CoA + ATP + H2O = N(4)-acetylcytidine(34) in elongator tRNA(Met) + ADP + phosphate + CoA + H(+). In terms of biological role, catalyzes the formation of N(4)-acetylcytidine (ac(4)C) at the wobble position of tRNA(Met), by using acetyl-CoA as an acetyl donor and ATP (or GTP). The chain is tRNA(Met) cytidine acetyltransferase TmcA from Yersinia pestis (strain D106004).